We begin with the raw amino-acid sequence, 890 residues long: Chloroquine resistance transporter (890 aa).

2 disordered regions span residues 1 to 163 and 280 to 300; these read MPPA…EAPL and GMQR…AAEG. Over 1-349 the chain is Cytoplasmic; it reads MPPAHHGSGG…RATRWIDRNA (349 aa). Residues 8–19 are compositionally biased toward basic residues; sequence SGGRRRPGRGNK. 2 stretches are compositionally biased toward low complexity: residues 102-126 and 134-156; these read APSQ…SSRS and SPVA…TSAS. A helical transmembrane segment spans residues 350–372; that stretch reads ATVRVACYTFLLLVTSTGNTICF. Over 373-391 the chain is Vacuolar; that stretch reads KKMIDKMPNYSPCLTQVTT. Residues 392–412 traverse the membrane as a helical segment; sequence VVFVPVFFALSLYTDYAGGLP. Residues 413–422 are Cytoplasmic-facing; sequence QEMADFPKRN. A helical membrane pass occupies residues 423–443; the sequence is FAVMGFLDSFSGVMAIIGAVH. Topologically, residues 444–447 are vacuolar; the sequence is TTGT. A helical membrane pass occupies residues 448-468; sequence TQVVLQQSCIVFSLLASIVML. Over 469–471 the chain is Cytoplasmic; that stretch reads RKR. The chain crosses the membrane as a helical span at residues 472 to 492; that stretch reads FHAAHYLGALVIILGVLVVKL. Residues 493–505 are Vacuolar-facing; sequence PDLLHPSSDGGGD. Residues 506–526 form a helical membrane-spanning segment; the sequence is VFVFNLLYLLSNLPTAVSCVY. Residues 527–544 lie on the Cytoplasmic side of the membrane; sequence KEVAFRGVEMGTNYLQAW. Residues 545 to 565 traverse the membrane as a helical segment; the sequence is VALFQFLIGFLVLPLNALPVL. Residues 566-614 are Vacuolar-facing; the sequence is GPQRVPLAELPASLWNGTRCLFGFNTIVTNCGGAGNMESPCDNCEGAWK. N-linked (GlcNAc...) asparagine glycosylation is present at Asn581. Intrachain disulfides connect Cys585-Cys609 and Cys596-Cys606. The chain crosses the membrane as a helical span at residues 615 to 634; the sequence is YVGMYLSFNLLYNMFIIFVV. At 635-640 the chain is on the cytoplasmic side; it reads KSGGAA. A helical transmembrane segment spans residues 641-663; it reads LTFLVSTLRLPVTALAFCSRAIM. Residues 664–673 are Vacuolar-facing; the sequence is GDRAVPPKAT. The helical transmembrane segment at 674–694 threads the bilayer; that stretch reads DFYGLLVLILGLVIYRAGGIM. The Cytoplasmic portion of the chain corresponds to 695–890; the sequence is KRRAQRRAVA…GKSRANNGCI (196 aa). Residues 798-871 are disordered; the sequence is AAFTPFTQRM…NRVGGYEPPS (74 aa).

The protein belongs to the CRT-like transporter family.

It is found in the vacuole membrane. Nutrient transporter. Involved in maintaining the osmotic homeostasis of the digestive vacuole. Required for the proper organization of the endolysosomal system and, in turn, indirectly for microneme secretion and parasite invasion. Required for bradyzoite viability and cyst development. The sequence is that of Chloroquine resistance transporter from Toxoplasma gondii.